A 1875-amino-acid chain; its full sequence is Protein MLP1 (1875 aa).

Serine 2 is subject to N-acetylserine. Coiled coils occupy residues 69–487 and 531–1678; these read ELKA…IQYL and ERLV…SAES. Residue threonine 337 is modified to Phosphothreonine. Serine 379 bears the Phosphoserine mark. Positions 1496-1565 match the Required for nuclear localization motif; sequence QPSNINMEEI…EEKVEERIKS (70 aa). The segment at 1641–1689 is disordered; that stretch reads KKSFDEGKQQAMMKTTLLERKLAKMESQLSETKQSAESPPKSVNNVQNP. Polar residues predominate over residues 1667 to 1688; it reads SQLSETKQSAESPPKSVNNVQN. 2 positions are modified to phosphoserine: serine 1670 and serine 1710. Residues 1716-1725 show a composition bias toward low complexity; it reads KLNSKSSSGG. The tract at residues 1716 to 1875 is disordered; sequence KLNSKSSSGG…TDKVNDENSI (160 aa). The segment covering 1728–1737 has biased composition (polar residues); it reads PFTSPSPNKH. Serine 1733 carries the post-translational modification Phosphoserine. Positions 1738-1748 are enriched in basic and acidic residues; it reads LQNDNDKRESL. A compositionally biased stretch (polar residues) spans 1787–1801; sequence TSNNPAQKDSSNRNV. Serine 1803 is modified (phosphoserine). 2 stretches are compositionally biased toward basic and acidic residues: residues 1807–1840 and 1865–1875; these read TEKK…GELK and ETDKVNDENSI. Residues 1834–1866 are a coiled coil; sequence DEVGELKNDEDDTTENINESKKIKTEDEEEKET.

As to quaternary structure, component of the nuclear pore complex (NPC). NPC constitutes the exclusive means of nucleocytoplasmic transport. NPCs allow the passive diffusion of ions and small molecules and the active, nuclear transport receptor-mediated bidirectional transport of macromolecules such as proteins, RNAs, ribonucleoparticles (RNPs), and ribosomal subunits across the nuclear envelope. Due to its 8-fold rotational symmetry, all subunits are present with 8 copies or multiples thereof. Interacts with NAB2, a hnRNP required for mRNA export. Interacts with MLP2. Post-translationally, may be phosphorylated by CDC28.

Its subcellular location is the nucleus. It localises to the nuclear pore complex. Together with the closely related MLP2, involved in the structural and functional organization of perinuclear chromatin. Together with MLP2, associates with the nuclear pore complex and form filamentous structures along the nuclear periphery. Has a role in the localization of Esc1 to nucleolar regions. Together with MLP2, mediates tethering of the some telomeres to the nuclear periphery, probably mediated by YKU70/YKU80 (HDF1/HDF2) heterodimer and show perinuclear location dependent silencing. MLP1 and MLP2 are involved in telomere length regulation but not silencing or telomere anchoring. Recognizes the 5'-splice site of pre-mRNAs and retains unspliced pre-mRNA in the nucleus without affecting splicing itself. This is Protein MLP1 (MLP1) from Saccharomyces cerevisiae (strain ATCC 204508 / S288c) (Baker's yeast).